The sequence spans 230 residues: Claudin-2 (230 aa).

At 1-7 (MASLGLQ) the chain is on the cytoplasmic side. The helical transmembrane segment at 8–28 (LVGYILGLLGLLGTLVAMLLP) threads the bilayer. Over 29 to 81 (SWRTSSYVGTSIVTAVGFSKGLWMECATHSTGITQCDIYSTLLGLPADIQAAQ) the chain is Extracellular. A disulfide bridge links Cys54 with Cys64. A helical transmembrane segment spans residues 82–102 (AMMVTSSAISSLACIVSVVGM). The Cytoplasmic portion of the chain corresponds to 103-116 (RCTVFCQDSRAKDR). Residues 117 to 137 (LAVVGGVFFIIGGLLGFIPVA) traverse the membrane as a helical segment. Over 138-162 (WNLHGILRDFYSPLVPDSMKFEIGE) the chain is Extracellular. The chain crosses the membrane as a helical span at residues 163–183 (ALYLGIISSLFSLVAGIILCF). At 184–230 (SCPLQGNRSDYYDSYQAQPLATRGSPRPGQPPKAKSEFNSYSLTGYV) the chain is on the cytoplasmic side. Positions 205 to 230 (TRGSPRPGQPPKAKSEFNSYSLTGYV) are disordered. Residue Lys218 forms a Glycyl lysine isopeptide (Lys-Gly) (interchain with G-Cter in SUMO) linkage. Phosphoserine occurs at positions 219 and 223. Polar residues predominate over residues 220 to 230 (EFNSYSLTGYV). Positions 229–230 (YV) are interaction with TJP1, TJP2 and TJP3.

This sequence belongs to the claudin family. As to quaternary structure, can form homo- and heteropolymers with other claudins to mediate paracellular barrier and channel functions of tight junctions in response to physiological stimuli. Homopolymers interact with CLDN3, but not CLDN1, homopolymers. Directly interacts with TJP1/ZO-1, TJP2/ZO-2 and TJP3/ZO-3. Post-translationally, the disulfide bond is necessary for pore formation, but is not required for correct protein trafficking.

The protein localises to the cell junction. The protein resides in the tight junction. It localises to the cell membrane. The catalysed reaction is Na(+)(in) = Na(+)(out). It catalyses the reaction K(+)(in) = K(+)(out). The enzyme catalyses Rb(+)(in) = Rb(+)(out). It carries out the reaction Li(+)(in) = Li(+)(out). The catalysed reaction is Cs(+)(in) = Cs(+)(out). It catalyses the reaction Ca(2+)(in) = Ca(2+)(out). The enzyme catalyses methylamine(out) = methylamine(in). It carries out the reaction choline(out) = choline(in). The catalysed reaction is H2O(in) = H2O(out). Functionally, forms paracellular channels: polymerizes in tight junction strands with cation- and water-selective channels through the strands, conveying epithelial permeability in a process known as paracellular tight junction permeability. In intestinal epithelium, allows for sodium and water fluxes from the peritoneal side to the lumen of the intestine to regulate nutrient absorption and clear enteric pathogens as part of mucosal immune response. In kidney, allows passive sodium and calcium reabsorption across proximal tubules from the lumen back to the bloodstream. In the hepatobiliary tract, allows paracellular water and cation fluxes in the hepatic perivenous areas and biliary epithelium to generate bile flow and maintain osmotic gradients. The chain is Claudin-2 (CLDN2) from Canis lupus familiaris (Dog).